The following is a 96-amino-acid chain: Secretoglobin family 2B member 2 (96 aa).

An N-terminal signal peptide occupies residues Met1–Ala23.

Belongs to the secretoglobin family.

The protein localises to the secreted. This is Secretoglobin family 2B member 2 (SCGB2B2) from Homo sapiens (Human).